The following is a 380-amino-acid chain: Protein Wnt-5a (380 aa).

The signal sequence occupies residues 1–37 (MKKPIGILSPGVALGTAGGAMSSKFFLMALATFFSFA). The propeptide occupies 38 to 61 (QVVIEANSWWSLGMNNPVQMSEVH). Cysteine 104 and cysteine 115 are joined by a disulfide. Residues asparagine 114 and asparagine 120 are each glycosylated (N-linked (GlcNAc...) asparagine). 10 disulfides stabilise this stretch: cysteine 154-cysteine 162, cysteine 164-cysteine 182, cysteine 238-cysteine 252, cysteine 240-cysteine 247, cysteine 309-cysteine 340, cysteine 325-cysteine 335, cysteine 339-cysteine 379, cysteine 355-cysteine 370, cysteine 357-cysteine 367, and cysteine 362-cysteine 363. Serine 244 carries the O-palmitoleoyl serine; by PORCN lipid modification. Asparagine 312 and asparagine 326 each carry an N-linked (GlcNAc...) asparagine glycan.

It belongs to the Wnt family. Forms a soluble 1:1 complex with AFM; this prevents oligomerization and is required for prolonged biological activity. The complex with AFM may represent the physiological form in body fluids. Homooligomer; disulfide-linked, leading to inactivation (in vitro). Interacts with PORCN. Interacts with WLS. Interacts with glypican GCP3. Interacts with PKD1 (via extracellular domain). Interacts with TMEM67. In terms of processing, glycosylation is necessary for secretion but not for activity. Post-translationally, palmitoleoylation is required for efficient binding to frizzled receptors. Depalmitoleoylation leads to Wnt signaling pathway inhibition. Proteolytic processing by TIKI1 and TIKI2 promotes oxidation and formation of large disulfide-bond oligomers, leading to inactivation of WNT5A.

Its subcellular location is the secreted. It localises to the extracellular space. It is found in the extracellular matrix. Ligand for members of the frizzled family of seven transmembrane receptors. Can activate or inhibit canonical Wnt signaling, depending on receptor context. In the presence of FZD4, activates beta-catenin signaling. In the presence of ROR2, inhibits the canonical Wnt pathway by promoting beta-catenin degradation through a GSK3-independent pathway which involves down-regulation of beta-catenin-induced reporter gene expression. Suppression of the canonical pathway allows chondrogenesis to occur and inhibits tumor formation. Stimulates cell migration. Decreases proliferation, migration, invasiveness and clonogenicity of carcinoma cells and may act as a tumor suppressor. Mediates motility of melanoma cells. Required during embryogenesis for extension of the primary anterior-posterior axis and for outgrowth of limbs and the genital tubercle. Inhibits type II collagen expression in chondrocytes. The protein is Protein Wnt-5a (Wnt5a) of Rattus norvegicus (Rat).